The sequence spans 549 residues: Glucose-6-phosphate isomerase (549 aa).

Glu355 functions as the Proton donor in the catalytic mechanism. Catalysis depends on residues His387 and Lys515.

The protein belongs to the GPI family.

The protein resides in the cytoplasm. The catalysed reaction is alpha-D-glucose 6-phosphate = beta-D-fructose 6-phosphate. It participates in carbohydrate biosynthesis; gluconeogenesis. The protein operates within carbohydrate degradation; glycolysis; D-glyceraldehyde 3-phosphate and glycerone phosphate from D-glucose: step 2/4. Functionally, catalyzes the reversible isomerization of glucose-6-phosphate to fructose-6-phosphate. This is Glucose-6-phosphate isomerase from Haemophilus influenzae (strain PittEE).